We begin with the raw amino-acid sequence, 396 residues long: Tryptophan synthase beta chain (396 aa).

An N6-(pyridoxal phosphate)lysine modification is found at K96.

The protein belongs to the TrpB family. Tetramer of two alpha and two beta chains. Requires pyridoxal 5'-phosphate as cofactor.

The catalysed reaction is (1S,2R)-1-C-(indol-3-yl)glycerol 3-phosphate + L-serine = D-glyceraldehyde 3-phosphate + L-tryptophan + H2O. It participates in amino-acid biosynthesis; L-tryptophan biosynthesis; L-tryptophan from chorismate: step 5/5. In terms of biological role, the beta subunit is responsible for the synthesis of L-tryptophan from indole and L-serine. The protein is Tryptophan synthase beta chain of Azobacteroides pseudotrichonymphae genomovar. CFP2.